The chain runs to 280 residues: MAAVVALSLRRRFPAAALGGARLQACRGAQTAAAAAPRIKKFAIYRWDPDKTGDKPHMQTYEIDLNNCGPMVLDALIKIKNEIDSTLTFRRSCREGICGSCAMNINGGNTLACTRRIDTNLSKVSKIYPLPHMYVIKDLVPDLSNFYAQYKSIEPYLKKKDESQGGKEQYLQSIEDREKLDGLYECILCACCSTSCPSYWWNGDKYLGPAVLMQAYRWMIDSRDDFTEERLAKLQDPFSLYRCHTIMNCTQTCPKGLNPGKAIAEIKKMMATYKEKQASA.

A mitochondrion-targeting transit peptide spans 1–28; that stretch reads MAAVVALSLRRRFPAAALGGARLQACRG. A 2Fe-2S ferredoxin-type domain is found at 40-133; sequence KKFAIYRWDP…VSKIYPLPHM (94 aa). 2 positions are modified to N6-acetyllysine: lysine 51 and lysine 55. Residues cysteine 93, cysteine 98, cysteine 101, and cysteine 113 each coordinate [2Fe-2S] cluster. The tract at residues 146-218 is interaction with SDHAF1; it reads FYAQYKSIEP…PAVLMQAYRW (73 aa). Positions 176-206 constitute a 4Fe-4S ferredoxin-type domain; sequence DREKLDGLYECILCACCSTSCPSYWWNGDKY. Cysteine 186, cysteine 189, and cysteine 192 together coordinate [4Fe-4S] cluster. Cysteine 196 provides a ligand contact to [3Fe-4S] cluster. Tryptophan 201 is an a ubiquinone binding site. Residues cysteine 243 and cysteine 249 each contribute to the [3Fe-4S] cluster site. Cysteine 253 contacts [4Fe-4S] cluster.

It belongs to the succinate dehydrogenase/fumarate reductase iron-sulfur protein family. As to quaternary structure, component of complex II composed of four subunits: the flavoprotein (FP) SDHA, iron-sulfur protein (IP) SDHB, and a cytochrome b560 composed of SDHC and SDHD. Interacts with SDHAF1; the interaction is required for iron-sulfur cluster incorporation into SDHB. The cofactor is [2Fe-2S] cluster. [3Fe-4S] cluster serves as cofactor. It depends on [4Fe-4S] cluster as a cofactor.

The protein localises to the mitochondrion inner membrane. The enzyme catalyses a quinone + succinate = fumarate + a quinol. It carries out the reaction (R)-malate + a quinone = enol-oxaloacetate + a quinol. It catalyses the reaction (S)-malate + a quinone = enol-oxaloacetate + a quinol. It functions in the pathway carbohydrate metabolism; tricarboxylic acid cycle; fumarate from succinate (eukaryal route): step 1/1. Its activity is regulated as follows. Enol-oxaloacetate inhibits the succinate dehydrogenase activity. Functionally, iron-sulfur protein (IP) subunit of the succinate dehydrogenase complex (mitochondrial respiratory chain complex II), responsible for transferring electrons from succinate to ubiquinone (coenzyme Q). SDH also oxidizes malate to the non-canonical enol form of oxaloacetate, enol-oxaloacetate. Enol-oxaloacetate, which is a potent inhibitor of the succinate dehydrogenase activity, is further isomerized into keto-oxaloacetate. This chain is Succinate dehydrogenase [ubiquinone] iron-sulfur subunit, mitochondrial (SDHB), found in Bos taurus (Bovine).